Consider the following 212-residue polypeptide: Ribosome maturation factor RimP (212 aa).

This sequence belongs to the RimP family.

It localises to the cytoplasm. Functionally, required for maturation of 30S ribosomal subunits. The protein is Ribosome maturation factor RimP of Variovorax paradoxus (strain S110).